The sequence spans 401 residues: Multidrug resistance protein MdtA (401 aa).

An N-terminal signal peptide occupies residues 1 to 20 (MNQNNKHRTLLFRAALAAIA).

Belongs to the membrane fusion protein (MFP) (TC 8.A.1) family. Part of a tripartite efflux system composed of MdtA, MdtB and MdtC.

Its subcellular location is the cell inner membrane. The sequence is that of Multidrug resistance protein MdtA from Photorhabdus laumondii subsp. laumondii (strain DSM 15139 / CIP 105565 / TT01) (Photorhabdus luminescens subsp. laumondii).